Consider the following 134-residue polypeptide: U34-theraphotoxin-Cg1a (134 aa).

The first 19 residues, 1 to 19 (MKLAVVFLLTTVVFTLAQS), serve as a signal peptide directing secretion. 3 disulfide bridges follow: C24/C35, C29/C53, and C63/C84. Residues 97 to 134 (EQSSTSTSSTQGPITSSTVTTQSEATTETETTTAAEGK) are disordered. Residues 99-134 (SSTSTSSTQGPITSSTVTTQSEATTETETTTAAEGK) are compositionally biased toward low complexity.

It belongs to the neurotoxin 32 family. In terms of tissue distribution, expressed by the venom gland.

Its subcellular location is the secreted. The sequence is that of U34-theraphotoxin-Cg1a from Chilobrachys guangxiensis (Chinese earth tiger tarantula).